Consider the following 435-residue polypeptide: MVGGKKKTKICDKVSHEEDRISQLPEPLISEILFHLSTKDSVRTSALSTKWRYLWQSVPGLDLDPYASSNTNTIVSFVESFFDSHRDSWIRKLRLDLGYHHDKYDLMSWIDAATTRRIQHLDVHCFHDNKIPLSIYTCTTLVHLRLRWAVLTNPEFVSLPCLKIMHFENVSYPNETTLQKLISGSPVLEELILFSTMYPKGNVLQLRSDTLKRLDINEFIDVVIYAPLLQCLRAKMYSTKNFQIISSGFPAKLDIDFVNTGGRYQKKKVIEDILIDISRVRDLVISSNTWKEFFLYSKSRPLLQFRYISHLNARFYISDLEMLPTLLESCPKLESLILEMVKNQSTRRHGEKREPNVMVSTVPWCLVSSLKFVELKRSIPRYEGEMELVRYVLTNSTVLKKLRLNVYYTKKAKCAFLTELVAIPRCSSTCVVLVL.

Residues Glu18 to Asp64 form the F-box domain. LRR repeat units follow at residues Val123 to Trp148, Val170 to Ser195, Ala234 to Asn259, Gly262 to Ser287, and Arg314 to Met340. Residues Glu354–Val406 form the FBD domain.

This is F-box/FBD/LRR-repeat protein At1g51370 from Arabidopsis thaliana (Mouse-ear cress).